The sequence spans 327 residues: Putative HTH-type transcriptional regulatory protein MmarC6_0210 (327 aa).

The 56-residue stretch at 128–183 folds into the HTH cro/C1-type domain; that stretch reads LRETREKLKISVGELAEISRVSRKTIYKYEQNEANPSAEVAIKIEEYLDVPLIKGI. The segment at residues 139–158 is a DNA-binding region (H-T-H motif); sequence VGELAEISRVSRKTIYKYEQ.

In Methanococcus maripaludis (strain C6 / ATCC BAA-1332), this protein is Putative HTH-type transcriptional regulatory protein MmarC6_0210.